The following is a 359-amino-acid chain: UDP-3-O-acylglucosamine N-acyltransferase (359 aa).

Residue His253 is the Proton acceptor of the active site.

This sequence belongs to the transferase hexapeptide repeat family. LpxD subfamily. In terms of assembly, homotrimer.

It carries out the reaction a UDP-3-O-[(3R)-3-hydroxyacyl]-alpha-D-glucosamine + a (3R)-hydroxyacyl-[ACP] = a UDP-2-N,3-O-bis[(3R)-3-hydroxyacyl]-alpha-D-glucosamine + holo-[ACP] + H(+). Its pathway is bacterial outer membrane biogenesis; LPS lipid A biosynthesis. Catalyzes the N-acylation of UDP-3-O-acylglucosamine using 3-hydroxyacyl-ACP as the acyl donor. Is involved in the biosynthesis of lipid A, a phosphorylated glycolipid that anchors the lipopolysaccharide to the outer membrane of the cell. This Burkholderia cenocepacia (strain ATCC BAA-245 / DSM 16553 / LMG 16656 / NCTC 13227 / J2315 / CF5610) (Burkholderia cepacia (strain J2315)) protein is UDP-3-O-acylglucosamine N-acyltransferase.